Consider the following 410-residue polypeptide: Multifunctional CCA protein (410 aa).

ATP is bound by residues G8 and R11. 2 residues coordinate CTP: G8 and R11. Mg(2+)-binding residues include E21 and D23. ATP contacts are provided by R91, R137, and R140. 3 residues coordinate CTP: R91, R137, and R140. The 102-residue stretch at 228–329 folds into the HD domain; sequence TLLHQFLCLK…WKLFKSLDIL (102 aa).

The protein belongs to the tRNA nucleotidyltransferase/poly(A) polymerase family. Bacterial CCA-adding enzyme type 1 subfamily. Monomer. Can also form homodimers and oligomers. Mg(2+) is required as a cofactor. Ni(2+) serves as cofactor.

It catalyses the reaction a tRNA precursor + 2 CTP + ATP = a tRNA with a 3' CCA end + 3 diphosphate. The catalysed reaction is a tRNA with a 3' CCA end + 2 CTP + ATP = a tRNA with a 3' CCACCA end + 3 diphosphate. Catalyzes the addition and repair of the essential 3'-terminal CCA sequence in tRNAs without using a nucleic acid template. Adds these three nucleotides in the order of C, C, and A to the tRNA nucleotide-73, using CTP and ATP as substrates and producing inorganic pyrophosphate. tRNA 3'-terminal CCA addition is required both for tRNA processing and repair. Also involved in tRNA surveillance by mediating tandem CCA addition to generate a CCACCA at the 3' terminus of unstable tRNAs. While stable tRNAs receive only 3'-terminal CCA, unstable tRNAs are marked with CCACCA and rapidly degraded. The chain is Multifunctional CCA protein from Alcanivorax borkumensis (strain ATCC 700651 / DSM 11573 / NCIMB 13689 / SK2).